Consider the following 400-residue polypeptide: 3-phenylpropionate/cinnamic acid dioxygenase ferredoxin--NAD(+) reductase component (400 aa).

Residue 5-36 (TIIIVGGGQAAAMAAASLRQQGFTGELHLFSD) coordinates FAD. Position 146-174 (146-174 (SVVIIGAGTIGLELAASATQRRCKVTVIE)) interacts with NAD(+).

Belongs to the bacterial ring-hydroxylating dioxygenase ferredoxin reductase family. This dioxygenase system consists of four proteins: the two subunits of the hydroxylase component (HcaE and HcaF), a ferredoxin (HcaC) and a ferredoxin reductase (HcaD). Requires FAD as cofactor.

The enzyme catalyses 2 reduced [2Fe-2S]-[ferredoxin] + NAD(+) + H(+) = 2 oxidized [2Fe-2S]-[ferredoxin] + NADH. Its pathway is aromatic compound metabolism; 3-phenylpropanoate degradation. Part of the multicomponent 3-phenylpropionate dioxygenase, that converts 3-phenylpropionic acid (PP) and cinnamic acid (CI) into 3-phenylpropionate-dihydrodiol (PP-dihydrodiol) and cinnamic acid-dihydrodiol (CI-dihydrodiol), respectively. This Escherichia coli (strain K12 / MC4100 / BW2952) protein is 3-phenylpropionate/cinnamic acid dioxygenase ferredoxin--NAD(+) reductase component.